The primary structure comprises 427 residues: Glutamate-1-semialdehyde 2,1-aminomutase (427 aa).

Position 265 is an N6-(pyridoxal phosphate)lysine (Lys265).

Belongs to the class-III pyridoxal-phosphate-dependent aminotransferase family. HemL subfamily. In terms of assembly, homodimer. Pyridoxal 5'-phosphate is required as a cofactor.

Its subcellular location is the cytoplasm. The enzyme catalyses (S)-4-amino-5-oxopentanoate = 5-aminolevulinate. It participates in porphyrin-containing compound metabolism; protoporphyrin-IX biosynthesis; 5-aminolevulinate from L-glutamyl-tRNA(Glu): step 2/2. The polypeptide is Glutamate-1-semialdehyde 2,1-aminomutase (Pseudomonas fluorescens (strain Pf0-1)).